A 604-amino-acid polypeptide reads, in one-letter code: Protein TAX4 (604 aa).

Disordered regions lie at residues 38-77 (HPNG…PRSI), 132-249 (SFSN…RQQE), 267-299 (GTLP…QQEN), 338-380 (DETF…KGLK), and 394-428 (PFPH…NEDK). Polar residues predominate over residues 176 to 185 (YDNNVRSRSI). Low complexity-rich tracts occupy residues 186 to 203 (SPQV…SISS) and 224 to 240 (SMSS…KASL). Composition is skewed to basic residues over residues 276 to 290 (SQRK…HRLL), 366 to 379 (KKKK…KKGL), and 396 to 421 (PHHH…HTSS). Residues 469 to 559 (ANEDDESHLQ…RVWNSVDGYV (91 aa)) form the EH domain.

It belongs to the IRS4 family. As to quaternary structure, interacts with INP51.

In terms of biological role, with IRS4, acts as a positive regulator of INP51 activity and phosphatidylinositol 4,5-bisphosphate turnover. Negatively regulates signaling through the cell integrity pathway, including the MAP kinase SLT2. In Saccharomyces cerevisiae (strain ATCC 204508 / S288c) (Baker's yeast), this protein is Protein TAX4 (TAX4).